The primary structure comprises 427 residues: 3-phosphoshikimate 1-carboxyvinyltransferase (427 aa).

Residues Lys20, Ser21, and Arg25 each contribute to the 3-phosphoshikimate site. Lys20 is a binding site for phosphoenolpyruvate. Gly92 and Arg120 together coordinate phosphoenolpyruvate. Residues Ser166, Gln168, Asp312, and Lys339 each contribute to the 3-phosphoshikimate site. Phosphoenolpyruvate is bound at residue Gln168. The active-site Proton acceptor is the Asp312. Residues Arg343 and Arg385 each coordinate phosphoenolpyruvate.

The protein belongs to the EPSP synthase family. In terms of assembly, monomer.

The protein localises to the cytoplasm. It catalyses the reaction 3-phosphoshikimate + phosphoenolpyruvate = 5-O-(1-carboxyvinyl)-3-phosphoshikimate + phosphate. It functions in the pathway metabolic intermediate biosynthesis; chorismate biosynthesis; chorismate from D-erythrose 4-phosphate and phosphoenolpyruvate: step 6/7. Catalyzes the transfer of the enolpyruvyl moiety of phosphoenolpyruvate (PEP) to the 5-hydroxyl of shikimate-3-phosphate (S3P) to produce enolpyruvyl shikimate-3-phosphate and inorganic phosphate. In Streptococcus thermophilus (strain ATCC BAA-491 / LMD-9), this protein is 3-phosphoshikimate 1-carboxyvinyltransferase.